A 196-amino-acid chain; its full sequence is MKVGVLALQGAFREHQKVLAACGAESVQVRKPEQLEDISALVIPGGESTTIGKLLLEFNLFEPLVKLGQGGLPVFGTCAGMILLAREIAGSGQPRLGLMDISVERNAFGRQVESFEADLDIPVLGEEPFRAVFIRAPYIIEAGGGVEVLARFGEKIVMARQGRCLAAAFHPELTGDLRIHRYFLEKCVRAGQNCKG.

Residue 46 to 48 (GES) participates in L-glutamine binding. The active-site Nucleophile is the Cys-78. Residues Arg-105 and 134-135 (IR) each bind L-glutamine. Residues His-170 and Glu-172 each act as charge relay system in the active site.

Belongs to the glutaminase PdxT/SNO family. In terms of assembly, in the presence of PdxS, forms a dodecamer of heterodimers. Only shows activity in the heterodimer.

The enzyme catalyses aldehydo-D-ribose 5-phosphate + D-glyceraldehyde 3-phosphate + L-glutamine = pyridoxal 5'-phosphate + L-glutamate + phosphate + 3 H2O + H(+). It carries out the reaction L-glutamine + H2O = L-glutamate + NH4(+). It participates in cofactor biosynthesis; pyridoxal 5'-phosphate biosynthesis. Functionally, catalyzes the hydrolysis of glutamine to glutamate and ammonia as part of the biosynthesis of pyridoxal 5'-phosphate. The resulting ammonia molecule is channeled to the active site of PdxS. The sequence is that of Pyridoxal 5'-phosphate synthase subunit PdxT from Pelotomaculum thermopropionicum (strain DSM 13744 / JCM 10971 / SI).